Here is a 415-residue protein sequence, read N- to C-terminus: Beta-1,4-glucuronyltransferase 1 (415 aa).

The Cytoplasmic segment spans residues 1-8 (MQMSYAIR). A helical; Signal-anchor for type II membrane protein transmembrane segment spans residues 9–36 (CAFYQLLLAALMLVAMLQLLYLSLLSGL). At 37 to 415 (HGQEEQDQYF…AKYPDSPRHC (379 aa)) the chain is on the lumenal side. A glycan (N-linked (GlcNAc...) asparagine) is linked at asparagine 204. Mn(2+) contacts are provided by aspartate 227 and aspartate 229. The N-linked (GlcNAc...) asparagine glycan is linked to asparagine 300.

It belongs to the glycosyltransferase 49 family. Interacts with LARGE1 and LARGE2. It depends on Mn(2+) as a cofactor.

It localises to the golgi apparatus membrane. It catalyses the reaction 3-O-[beta-D-Xyl-(1-&gt;4)-Rib-ol-P-Rib-ol-P-3-beta-D-GalNAc-(1-&gt;3)-beta-D-GlcNAc-(1-&gt;4)-(O-6-P-alpha-D-Man)]-Thr-[protein] + UDP-alpha-D-glucuronate = 3-O-[beta-D-GlcA-(1-&gt;3)-beta-D-Xyl-(1-&gt;4)-Rib-ol-P-Rib-ol-P-3-beta-D-GalNAc-(1-&gt;3)-beta-D-GlcNAc-(1-&gt;4)-(O-6-P-alpha-D-Man)]-Thr-[protein] + UDP + H(+). The protein operates within protein modification; protein glycosylation. In terms of biological role, beta-1,4-glucuronyltransferase involved in O-mannosylation of alpha-dystroglycan (DAG1). Transfers a glucuronic acid (GlcA) residue onto a xylose (Xyl) acceptor to produce the glucuronyl-beta-1,4-xylose-beta disaccharide primer, which is further elongated by LARGE1, during synthesis of phosphorylated O-mannosyl glycan. Phosphorylated O-mannosyl glycan is a carbohydrate structure present in alpha-dystroglycan (DAG1), which is required for binding laminin G-like domain-containing extracellular proteins with high affinity. Required for axon guidance; via its function in O-mannosylation of alpha-dystroglycan (DAG1). The chain is Beta-1,4-glucuronyltransferase 1 from Bos taurus (Bovine).